The sequence spans 372 residues: uncharacterized protein (372 aa).

Residues 1-19 (MKIFFLFIILLGIIQLSNS) form the signal peptide. Residue asparagine 18 is glycosylated (N-linked (GlcNAc...) asparagine). Positions 20 to 160 (SSCNIDIAGD…IWTTKYSCAI (141 aa)) constitute an MRH domain. Cysteines 22 and 58 form a disulfide. An N-linked (GlcNAc...) asparagine glycan is attached at asparagine 59. A disulfide bridge connects residues cysteine 128 and cysteine 158. Positions 185–282 (NEILNEAQSN…VQFNDDIKLI (98 aa)) form a coiled coil. The segment at 201–233 (KNEDLNNNNNNNNNNNNNNNNNNNNNNNNNKIN) is disordered. Low complexity predominate over residues 206-230 (NNNNNNNNNNNNNNNNNNNNNNNNN).

The protein localises to the secreted. This is an uncharacterized protein from Dictyostelium discoideum (Social amoeba).